The sequence spans 387 residues: Deoxyguanosinetriphosphate triphosphohydrolase-like protein (387 aa).

Positions 78–209 (RLTHSLEVAQ…ANLADEVAYN (132 aa)) constitute an HD domain.

This sequence belongs to the dGTPase family. Type 2 subfamily.

This Ralstonia nicotianae (strain ATCC BAA-1114 / GMI1000) (Ralstonia solanacearum) protein is Deoxyguanosinetriphosphate triphosphohydrolase-like protein.